A 377-amino-acid chain; its full sequence is Nitric oxide reductase FlRd-NAD(+) reductase (377 aa).

Belongs to the FAD-dependent oxidoreductase family. FAD serves as cofactor.

It localises to the cytoplasm. It catalyses the reaction 2 reduced [nitric oxide reductase rubredoxin domain] + NAD(+) + H(+) = 2 oxidized [nitric oxide reductase rubredoxin domain] + NADH. The protein operates within nitrogen metabolism; nitric oxide reduction. Its function is as follows. One of at least two accessory proteins for anaerobic nitric oxide (NO) reductase. Reduces the rubredoxin moiety of NO reductase. This Klebsiella pneumoniae (strain 342) protein is Nitric oxide reductase FlRd-NAD(+) reductase.